A 602-amino-acid polypeptide reads, in one-letter code: Solute carrier organic anion transporter family member 1C1 (602 aa).

Residues 1–43 (MDTSSKENIQLFCKTSVQPVGRPSFKTEYPSSEEKQPCCGELK) lie on the Cytoplasmic side of the membrane. The helical transmembrane segment at 44–63 (VFLGALSFVYFAKALAEGYL) threads the bilayer. The Extracellular segment spans residues 64–82 (KSTITQIERRFDIPSSLVG). The helical transmembrane segment at 83–103 (VIDGSFEIGNLLVITFVSYFG) threads the bilayer. At 104 to 109 (AKLHRP) the chain is on the cytoplasmic side. Residues 110 to 134 (KIIGAGCLIMGVGTLLIAMPQFFME) form a helical membrane-spanning segment. Residues 135-139 (QYKYE) are Extracellular-facing. Residues 140 to 156 (IYSPSSNSTLSISPCLL) form a helical membrane-spanning segment. Residues 157–238 (ESSSQLPVSV…ARDFLPSLKY (82 aa)) are Cytoplasmic-facing. Residues 190-216 (PRSQSREDSNSSSEKSKFIRDDHTDYQ) form a disordered region. Residues 193–214 (QSREDSNSSSEKSKFIRDDHTD) show a composition bias toward basic and acidic residues. Residues 239 to 260 (LFGNPVYFLYLCTSTVQFNSLF) form a helical membrane-spanning segment. The Extracellular segment spans residues 261-280 (GMVTYKPKYIEQQYGQSSSR). Residues 281 to 304 (ANFVIGLINIPAVALGIFSGGIAM) traverse the membrane as a helical segment. Residues 305 to 308 (KKFR) are Cytoplasmic-facing. A helical transmembrane segment spans residues 309–332 (ISVCGAAKLYLGSSVFGYLLFLSL). At 333–444 (FALGCENSDV…NGCPQMFLYF (112 aa)) the chain is on the extracellular side. The 56-residue stretch at 360 to 415 (RALFSDCNPRCKCSETKWEPMCGENGITYVSACPAGCQTSNRSGKNIIFYNCTCVG) folds into the Kazal-like domain. Intrachain disulfides connect Cys366–Cys396, Cys372–Cys392, and Cys381–Cys413. Asn400, Asn410, and Asn423 each carry an N-linked (GlcNAc...) asparagine glycan. A helical membrane pass occupies residues 445-467 (LVISVITSYTLSLGGIPGYILLL). Topologically, residues 468 to 476 (RCIKPQLKS) are cytoplasmic. Residues 477 to 502 (FALGIYTLSIRVLAGIPAPVYFGVLI) traverse the membrane as a helical segment. Residues 503–536 (DTSCLKWGFKRCGSRGSCRLYDSNVFRHIYLGLT) lie on the Extracellular side of the membrane. Residues 537–554 (VILGTVSIFLSIAVLFIL) form a helical membrane-spanning segment. The Cytoplasmic portion of the chain corresponds to 555–602 (KKNYVSKHRNFITKRERTMVSTRFQKENCTTSDHLLQPKYWPGKETQL).

This sequence belongs to the organo anion transporter (TC 2.A.60) family.

Its subcellular location is the cell membrane. The enzyme catalyses 3,3',5'-triiodo-L-thyronine(out) = 3,3',5'-triiodo-L-thyronine(in). It carries out the reaction L-thyroxine(out) = L-thyroxine(in). The catalysed reaction is L-thyroxine sulfate(out) = L-thyroxine sulfate(in). Functionally, mediates the Na(+)-independent high affinity transport of organic anions such as the thyroid hormones L-thyroxine (T4), L-thyroxine sulfate (T4S), and 3,3',5'-triiodo-L-thyronine (reverse T3, rT3) at the plasma membrane. Regulates T4 levels in different brain regions by transporting T4, and also by serving as an export pump for T4S, which is a source of T4 after hydrolysis by local sulfatases. Increases the access of these substrates to the intracellular sites where they are metabolized by the deiodinases. Other potential substrates, such as triiodothyronine (T3), 17-beta-glucuronosyl estradiol (17beta-estradiol 17-O-(beta-D-glucuronate)), estrone-3-sulfate (E1S) and sulfobromophthalein (BSP) are transported with much lower efficiency. Transports T4 and E1S in a pH-insensitive manner. Facilitates the transport of thyroid hormones across the blood-brain barrier and into glia and neuronal cells in the brain. In Macaca fascicularis (Crab-eating macaque), this protein is Solute carrier organic anion transporter family member 1C1 (SLCO1C1).